The sequence spans 320 residues: E3 ubiquitin-protein ligase RZF1 (320 aa).

At serine 2 the chain carries N-acetylserine. Residues 186–227 form an RING-type; atypical zinc finger; that stretch reads CPVCKDEFELKSEAKQMPCHHIYHSDCIVPWLVQHNSCPVCR. The tract at residues 229 to 320 is disordered; that stretch reads ELPSRGSSSS…MGYSGWPFDY (92 aa). 2 stretches are compositionally biased toward low complexity: residues 232–249 and 295–308; these read SRGS…STNG and QQQQ…QQQQ.

Expressed in seedlings and in flowers.

It carries out the reaction S-ubiquitinyl-[E2 ubiquitin-conjugating enzyme]-L-cysteine + [acceptor protein]-L-lysine = [E2 ubiquitin-conjugating enzyme]-L-cysteine + N(6)-ubiquitinyl-[acceptor protein]-L-lysine.. Functionally, E3 ubiquitin-protein ligase that promotes osmotic stress and abscisic acid (ABA) responses. Negatively regulates drought-mediated control of early seedling development, probably by influencing proline content, water loss, membrane ion leakage and the expression of dehydration stress-related genes (e.g. RAB18, RD29A, RD29B, AOX1A, ERD15, ERD1, COR15A, P5CS1 and P5CR). Modulates bZIP11 accumulation during rehydration following drought. This is E3 ubiquitin-protein ligase RZF1 from Arabidopsis thaliana (Mouse-ear cress).